Consider the following 369-residue polypeptide: UDP-N-acetylenolpyruvoylglucosamine reductase (369 aa).

The 174-residue stretch at 29-202 (VGPIARRVIT…LEVEFALDPS (174 aa)) folds into the FAD-binding PCMH-type domain. Residue Arg176 is part of the active site. The Proton donor role is filled by Ser257. The active site involves Glu361.

It belongs to the MurB family. The cofactor is FAD.

It is found in the cytoplasm. It carries out the reaction UDP-N-acetyl-alpha-D-muramate + NADP(+) = UDP-N-acetyl-3-O-(1-carboxyvinyl)-alpha-D-glucosamine + NADPH + H(+). Its pathway is cell wall biogenesis; peptidoglycan biosynthesis. Its function is as follows. Cell wall formation. The sequence is that of UDP-N-acetylenolpyruvoylglucosamine reductase from Mycobacterium tuberculosis (strain ATCC 25177 / H37Ra).